The following is a 652-amino-acid chain: ATP-binding cassette sub-family G member 5 (652 aa).

The interval 1 to 30 (MSELPFLSPEGARGPHNNRGSQSSLEEGSV) is disordered. At 1 to 384 (MSELPFLSPE…RVTRNLMRNK (384 aa)) the chain is on the cytoplasmic side. The span at 18-30 (NRGSQSSLEEGSV) shows a compositional bias: polar residues. The region spanning 39–294 (LGVLNVSFSV…FNNCGYPCPE (256 aa)) is the ABC transporter domain. ATP is bound at residue 87–94 (GSSGSGKT). Residues 385 to 405 (QVVIMRLVQNLIMGLFLIFYL) traverse the membrane as a helical segment. Residues 389 to 646 (MRLVQNLIMG…ILGMVVFKVR (258 aa)) form the ABC transmembrane type-2 domain. At 406–422 (LRVQNNMLKGAVQDRVG) the chain is on the extracellular side. A helical membrane pass occupies residues 423-443 (LLYQLVGATPYTGMLNAVNLF). The Cytoplasmic segment spans residues 444–468 (PMLRAVSDQESQDGLYQKWQMLLAY). Residues 469–490 (VLHALPFSIVATVIFSSVCYWT) form a helical membrane-spanning segment. Over 491–501 (LGLYPEVARFG) the chain is Extracellular. Residues 502-522 (YFSAALLAPHLIGEFLTLVLL) traverse the membrane as a helical segment. The Cytoplasmic segment spans residues 523 to 529 (GMVQNPN). A helical transmembrane segment spans residues 530 to 550 (IVNSIVALLSISGLLIGSGFI). The Extracellular segment spans residues 551-624 (RNIEEMPIPL…PGATSRFTTN (74 aa)). N-linked (GlcNAc...) asparagine glycosylation is found at asparagine 585 and asparagine 592. The helical transmembrane segment at 625–645 (FLILYSFIPTLVILGMVVFKV) threads the bilayer. At 646 to 652 (RDYLISR) the chain is on the cytoplasmic side.

It belongs to the ABC transporter superfamily. ABCG family. Eye pigment precursor importer (TC 3.A.1.204) subfamily. Heterodimer with ABCG8. It depends on Mg(2+) as a cofactor. In terms of processing, N-glycosylated. N-glycosylation is important for efficient export out of the endoplasmic reticulum. As to expression, detected in liver (at protein level). Expressed only in liver and intestine.

The protein resides in the cell membrane. Its subcellular location is the apical cell membrane. The catalysed reaction is cholesterol(in) + ATP + H2O = cholesterol(out) + ADP + phosphate + H(+). It catalyses the reaction sitosterol(in) + ATP + H2O = sitosterol(out) + ADP + phosphate + H(+). Its function is as follows. ABCG5 and ABCG8 form an obligate heterodimer that mediates Mg(2+)- and ATP-dependent sterol transport across the cell membrane. Plays an essential role in the selective transport of dietary plant sterols and cholesterol in and out of the enterocytes and in the selective sterol excretion by the liver into bile. Required for normal sterol homeostasis. The heterodimer with ABCG8 has ATPase activity. The sequence is that of ATP-binding cassette sub-family G member 5 from Rattus norvegicus (Rat).